Here is a 335-residue protein sequence, read N- to C-terminus: DNA-directed RNA polymerase RPB7 homolog (335 aa).

It belongs to the Asfivirus DNA-directed RNA polymerase RPB7 homolog family. In terms of assembly, part of the viral DNA-directed RNA polymerase that consists of 8 polII-like subunits (RPB1, RPB2, RPB3, RPB5, RPB6, RPB7, RPB9, RPB10), a capping enzyme and a termination factor.

The protein resides in the host cytoplasm. It is found in the virion. Its function is as follows. Component of the DNA-directed RNA polymerase (RNAP) that catalyzes the transcription in the cytoplasm of viral DNA into RNA using the four ribonucleoside triphosphates as substrates. In Ornithodoros (relapsing fever ticks), this protein is DNA-directed RNA polymerase RPB7 homolog.